A 533-amino-acid chain; its full sequence is Quinate permease (533 aa).

Topologically, residues 1–21 (MSILALVEDRPTPREVYNWRV) are cytoplasmic. A helical membrane pass occupies residues 22–42 (YLLAAVASFTSCMIGYDSAFI). The Extracellular segment spans residues 43 to 67 (GTTLSLQSFQNEFNWESLNTDLISA). A helical membrane pass occupies residues 68 to 88 (NIVSLYQAGAFFGALFAYPIG). At 89–94 (HFWGRR) the chain is on the cytoplasmic side. A helical transmembrane segment spans residues 95–115 (WGLMFSALIFFLGAGMMLGAN). Residues 116–127 (GDRGLGLIYGGR) lie on the Extracellular side of the membrane. The helical transmembrane segment at 128–148 (VLAGIGVGAGSNICPIYISEM) threads the bilayer. The Cytoplasmic segment spans residues 149 to 156 (APPAIRGR). A helical membrane pass occupies residues 157-177 (LVGVYELGWQIGGVVGFWINY). The Extracellular portion of the chain corresponds to 178–191 (GVDETLAPSHKQWI). A helical membrane pass occupies residues 192–212 (IPFAVQLIPAGLLIIGALLIR). At 213 to 282 (ESPRWLFLRG…AWTNKRILYR (70 aa)) the chain is on the cytoplasmic side. Residues 283-303 (LFLGSMLFLWQNGSGINAINY) form a helical membrane-spanning segment. The Extracellular segment spans residues 304 to 324 (YSPRVFKSIGVSGGNTSLLTT). A helical transmembrane segment spans residues 325 to 346 (GIFGVVKAVITFVWLLYLIDHF). The Cytoplasmic portion of the chain corresponds to 347–349 (GRR). The helical transmembrane segment at 350-370 (NLLLVGAAGGSVCLWIVGGYI) threads the bilayer. Residues 371–385 (KIAKPENNPEGTQLD) lie on the Extracellular side of the membrane. Residues 386–406 (SGGIAAIFFFYLWTAFYTPSW) traverse the membrane as a helical segment. Topologically, residues 407 to 431 (NGTPWVINSEMFDPTVRSLAQACAA) are cytoplasmic. Residues 432-452 (ASNWLWNFLISRFTPQMFTSM) traverse the membrane as a helical segment. Residues 453 to 454 (GY) are Extracellular-facing. The chain crosses the membrane as a helical span at residues 455–475 (GVYFFFASLMILSIVFVFFLI). The Cytoplasmic portion of the chain corresponds to 476-533 (PETKGVPLESMETLFDKKPVWHAHSQLIRELRENEEAFRADMGASGKGGVTKEYVEEA).

Belongs to the major facilitator superfamily. Sugar transporter (TC 2.A.1.1) family. Interacts with creB. Post-translationally, ubiquitinated. Deubiquitinated by creB, probably to control its activity or amount.

The protein resides in the cell membrane. In terms of biological role, integral membrane transporter that imports quinic acid to be catabolized as a carbon source. This chain is Quinate permease (qutD), found in Emericella nidulans (strain FGSC A4 / ATCC 38163 / CBS 112.46 / NRRL 194 / M139) (Aspergillus nidulans).